A 152-amino-acid chain; its full sequence is MNKIESITEDLITPIVEAEQFELVDIEFKKEGPHKYLRVYIDKPGGITLDDCQKVSEGLSKKLDEADPIVENYFLEVSSPGLDRPLKREVDFLKFKGEMIELKLYEAIDGQKTIEGELVGLIDDKIVIKISETEEVEMPREKVAITKLAIKF.

This sequence belongs to the RimP family.

Its subcellular location is the cytoplasm. Required for maturation of 30S ribosomal subunits. The protein is Ribosome maturation factor RimP of Alkaliphilus metalliredigens (strain QYMF).